The chain runs to 447 residues: Glyceraldehyde-3-phosphate dehydrogenase GAPB, chloroplastic (447 aa).

The N-terminal 80 residues, 1 to 80, are a transit peptide targeting the chloroplast; it reads MATHAALAVS…STPVRGETVA (80 aa). NADP(+)-binding positions include 91 to 92, aspartate 115, and arginine 160; that span reads RI. Residues 234 to 236, threonine 265, arginine 280, 293 to 294, and arginine 316 contribute to the D-glyceraldehyde 3-phosphate site; these read SCT and TG. The active-site Nucleophile is the cysteine 235. Asparagine 399 contacts NADP(+).

Belongs to the glyceraldehyde-3-phosphate dehydrogenase family. Tetramer of either four A chains (GAPDH 2) or two A and two B chains (GAPDH 1). In terms of tissue distribution, expressed in leaves and stems.

The protein localises to the plastid. Its subcellular location is the chloroplast membrane. It localises to the chloroplast stroma. It catalyses the reaction D-glyceraldehyde 3-phosphate + phosphate + NADP(+) = (2R)-3-phospho-glyceroyl phosphate + NADPH + H(+). The protein operates within carbohydrate biosynthesis; Calvin cycle. Functionally, involved in the photosynthetic reductive pentose phosphate pathway (Calvin-Benson cycle). Catalyzes the reduction of 1,3-diphosphoglycerate by NADPH. This chain is Glyceraldehyde-3-phosphate dehydrogenase GAPB, chloroplastic (GAPB), found in Arabidopsis thaliana (Mouse-ear cress).